Here is a 281-residue protein sequence, read N- to C-terminus: Pantothenate synthetase (281 aa).

Met30 to His37 serves as a coordination point for ATP. His37 acts as the Proton donor in catalysis. Gln61 contacts (R)-pantoate. Position 61 (Gln61) interacts with beta-alanine. An ATP-binding site is contributed by Gly147–Asp150. Gln153 lines the (R)-pantoate pocket. ATP contacts are provided by residues Ile176 and Lys184–Arg187.

It belongs to the pantothenate synthetase family. As to quaternary structure, homodimer.

It is found in the cytoplasm. It catalyses the reaction (R)-pantoate + beta-alanine + ATP = (R)-pantothenate + AMP + diphosphate + H(+). The protein operates within cofactor biosynthesis; (R)-pantothenate biosynthesis; (R)-pantothenate from (R)-pantoate and beta-alanine: step 1/1. In terms of biological role, catalyzes the condensation of pantoate with beta-alanine in an ATP-dependent reaction via a pantoyl-adenylate intermediate. The chain is Pantothenate synthetase from Clostridium botulinum (strain Kyoto / Type A2).